A 304-amino-acid polypeptide reads, in one-letter code: UDP-N-acetylenolpyruvoylglucosamine reductase (304 aa).

Residues 33 to 198 (RVGGPADILV…IEATVELESG (166 aa)) form the FAD-binding PCMH-type domain. Arg-177 is an active-site residue. Ser-227 (proton donor) is an active-site residue. The active site involves Glu-297.

The protein belongs to the MurB family. FAD serves as cofactor.

It localises to the cytoplasm. The enzyme catalyses UDP-N-acetyl-alpha-D-muramate + NADP(+) = UDP-N-acetyl-3-O-(1-carboxyvinyl)-alpha-D-glucosamine + NADPH + H(+). The protein operates within cell wall biogenesis; peptidoglycan biosynthesis. Functionally, cell wall formation. The polypeptide is UDP-N-acetylenolpyruvoylglucosamine reductase (Clostridium perfringens (strain ATCC 13124 / DSM 756 / JCM 1290 / NCIMB 6125 / NCTC 8237 / Type A)).